The chain runs to 192 residues: uncharacterized protein (192 aa).

Positions 1–24 are cleaved as a signal peptide; it reads MSGVLSCVLRACACAGLCCWVCMG. The interval 140–192 is disordered; that stretch reads RAGADEGAGGNAAGCPEDTRGFARSPGDLMGGMNGDLGDEGETGEGGDNGAGE.

This is an uncharacterized protein from Human herpesvirus 6A (strain Uganda-1102) (HHV-6 variant A).